Reading from the N-terminus, the 630-residue chain is DNA mismatch repair protein MutL (630 aa).

Belongs to the DNA mismatch repair MutL/HexB family.

Functionally, this protein is involved in the repair of mismatches in DNA. It is required for dam-dependent methyl-directed DNA mismatch repair. May act as a 'molecular matchmaker', a protein that promotes the formation of a stable complex between two or more DNA-binding proteins in an ATP-dependent manner without itself being part of a final effector complex. This is DNA mismatch repair protein MutL from Lactobacillus johnsonii (strain CNCM I-12250 / La1 / NCC 533).